The primary structure comprises 380 residues: E3 ubiquitin-protein ligase PHF7 (380 aa).

Residues 1–23 (MRTIKEKKEHPRLRKTARTKKVT) form a disordered region. Over residues 10–23 (HPRLRKTARTKKVT) the composition is skewed to basic residues. The segment at 30–68 (GPVCLLCFQEPGDPEKLGEFLQKDNLCVHYFCLILSSKL) adopts a C2HC pre-PHD-type zinc-finger fold. Positions 33, 36, 58, and 61 each coordinate Zn(2+). The interval 67–92 (KLPQKGQPNRGLHGFMPEDIKKEAAR) is required for interaction and ubiquitination of the nucleosome core particle. The PHD-type zinc finger occupies 96-145 (KVCFVCKRKGAAIRCQKDQCVQNFHLPCGQERGCLSQFFGEYKSYCGKHR). Zn(2+) contacts are provided by C98, C101, C110, C115, H120, C123, C141, H144, C159, C162, C178, C179, H185, C188, C203, C206, C247, C252, C272, C275, H281, C284, C296, and C299. The segment at 150–306 (IHQRSFGESC…NECLPASTED (157 aa)) is required for interaction with ubiquitinated UBE2D2. The RING-type; degenerate zinc finger occupies 159-207 (CVLCCEDLSRASVENIRSPCCSQAIYHRKCIQKYAHTSAKHFFKCPQCN). The tract at residues 243–300 (RYQHCDAPICLYEQGRDSFEDEGRWRLILCATCGSHGTHRDCSSLRPNSKKWECNECL) is required for association with and ubiquitination of H3. Residues 352-367 (EKPESSSGSSCQSWRS) are compositionally biased toward low complexity. The interval 352 to 380 (EKPESSSGSSCQSWRSKGIKVTKDCKKSK) is disordered.

Interacts with MEF2C; the interaction promotes MEF2C binding to its transcription targets. Interacts with GATA4; the interaction promotes GATA4 binding to its transcription targets. Interacts with UBE2D2; the interaction inhibits cleavage of PHF7 and promotes association of the complex with the nucleosome core particle.

It localises to the nucleus. The enzyme catalyses S-ubiquitinyl-[E2 ubiquitin-conjugating enzyme]-L-cysteine + [acceptor protein]-L-lysine = [E2 ubiquitin-conjugating enzyme]-L-cysteine + N(6)-ubiquitinyl-[acceptor protein]-L-lysine.. Its pathway is protein modification; protein ubiquitination. E3 ubiquitin-protein ligase which ubiquitinates histone H3 at 'Lys-14'. Required for male fertility, via inhibition of SPOP-mediated BRDT degradation when in the presence of acetylated histone H4 in early condensing spermatids. Stabilization of BRDT allows it to facilitate histone removal in early condensing spermatids and promote the progression of histone-to-protamine exchange. Promotes the expression of steroidogenesis proteins in the testes, and as a result plays a role in maintaining testosterone levels and repressing osteoclastogenesis. Promotes transcription of cardiac enhancer genes by facilitating binding of cardiac transcription factors such as MEF2C and GATA4 to target gene promoters. Ubiquitinates histone H4. Ubiquitinates histone H2A and H3 as part of the nucleosome core particle. The polypeptide is E3 ubiquitin-protein ligase PHF7 (Rattus norvegicus (Rat)).